A 291-amino-acid polypeptide reads, in one-letter code: Bis(5'-nucleosyl)-tetraphosphatase, symmetrical (291 aa).

The protein belongs to the Ap4A hydrolase family.

The catalysed reaction is P(1),P(4)-bis(5'-adenosyl) tetraphosphate + H2O = 2 ADP + 2 H(+). In terms of biological role, hydrolyzes diadenosine 5',5'''-P1,P4-tetraphosphate to yield ADP. In Coxiella burnetii (strain CbuK_Q154) (Coxiella burnetii (strain Q154)), this protein is Bis(5'-nucleosyl)-tetraphosphatase, symmetrical.